The chain runs to 221 residues: Ependymin (221 aa).

An N-terminal signal peptide occupies residues 1–21; the sequence is MQAFAVAALSIWLCLGATTLA. N-linked (GlcNAc...) asparagine glycosylation is found at Asn-37, Asn-77, and Asn-101.

It belongs to the ependymin family. In terms of assembly, forms disulfide-linked dimers. Binds calcium through the terminal sialic acids. As to expression, EPDs are synthesized in the meninx and secreted in the cerebrospinal fluid.

The protein localises to the secreted. Functionally, may play a role in neural plasticity. May be involved during axon regeneration. The sequence is that of Ependymin (epd) from Esox lucius (Northern pike).